Reading from the N-terminus, the 943-residue chain is Serine/threonine-protein kinase ATG1 (943 aa).

The Protein kinase domain occupies 22–327 (FVIDKEIGKG…FEDFFHHPVI (306 aa)). Residues 28–36 (IGKGSFAQV) and lysine 51 each bind ATP. The Proton acceptor role is filled by aspartate 165. Disordered stretches follow at residues 334–468 (LVED…LTDE), 503–561 (QQGQ…SPGA), 774–800 (LPEE…GGQA), 858–888 (HLPK…SDDK), and 914–943 (AASK…SVPT). Residues 338 to 352 (DIPKPEKPVLAETKS) are compositionally biased toward basic and acidic residues. Residues 517–529 (ATQQGHPTSTTGA) show a composition bias toward polar residues. Residues 542–554 (RNDHYRKASHDKT) show a composition bias toward basic and acidic residues. Residues 919-928 (QQQQQQQQVV) show a composition bias toward low complexity.

The protein belongs to the protein kinase superfamily. Ser/Thr protein kinase family. APG1/unc-51/ULK1 subfamily. As to quaternary structure, homodimer. Forms a ternary complex with ATG13 and ATG17.

The protein localises to the cytoplasm. Its subcellular location is the preautophagosomal structure membrane. The catalysed reaction is L-seryl-[protein] + ATP = O-phospho-L-seryl-[protein] + ADP + H(+). It carries out the reaction L-threonyl-[protein] + ATP = O-phospho-L-threonyl-[protein] + ADP + H(+). Serine/threonine protein kinase involved in the cytoplasm to vacuole transport (Cvt) and found to be essential in autophagy, where it is required for the formation of autophagosomes. Involved in the clearance of protein aggregates which cannot be efficiently cleared by the proteasome. Required for selective autophagic degradation of the nucleus (nucleophagy) as well as for mitophagy which contributes to regulate mitochondrial quantity and quality by eliminating the mitochondria to a basal level to fulfill cellular energy requirements and preventing excess ROS production. Also involved in endoplasmic reticulum-specific autophagic process, in selective removal of ER-associated degradation (ERAD) substrates. Plays a key role in ATG9 and ATG23 cycling through the pre-autophagosomal structure and is necessary to promote ATG18 binding to ATG9 through phosphorylation of ATG9. Catalyzes phosphorylation of ATG4, decreasing the interaction between ATG4 and ATG8 and impairing deconjugation of PE-conjugated forms of ATG8. The polypeptide is Serine/threonine-protein kinase ATG1 (Chaetomium globosum (strain ATCC 6205 / CBS 148.51 / DSM 1962 / NBRC 6347 / NRRL 1970) (Soil fungus)).